Reading from the N-terminus, the 319-residue chain is MAKRARLSTSFNPVYPYEDESSSQHPFINPGFISPDGFTQSPNGVLSLKCVNPLTTASGSLQLKVGSGLTVDTTDGSLEENIKVNTPLTKSNHSINLPIGNGLQIEQNKLCSKLGNGLTFDSSNSIALKNNTLWTGPKPEANCIIEYGKQNPDSKLTLILVKNGGIVNGYVTLMGASDYVNTLFKNKNVSINVELYFDATGHILPDSSSLKTDLELKYKQTADFSARGFMPSTTAYPFVLPNAGTHNENYIFGQCYYKASDGALFPLEVTVMLNKRLPDSRTSYVMTFLWSLNAGLAPETTQATLITSPFTFSYIREDD.

Shaft repeat units follow at residues 44–73 (GVLSLKCVNPLTTASGSLQLKVGSGLTVDT) and 82–103 (IKVNTPLTKSNHSINLPIGNGL).

Belongs to the adenoviridae fiber family. As to quaternary structure, homotrimer. Interacts with host receptor CD46. Interacts (via N-terminal tail region) with pentons.

It localises to the virion. The protein resides in the host nucleus. In terms of biological role, forms spikes that protrude from each vertex of the icosahedral capsid. Interacts with host receptor CD46 to provide virion initial attachment to target cell. Fiber proteins are shed during virus entry, when virus is still at the cell surface. Heparan sulfate might also play a role in virus binding. This chain is Fiber protein, found in Homo sapiens (Human).